The following is a 286-amino-acid chain: Digeranylgeranylglyceryl phosphate synthase (286 aa).

Transmembrane regions (helical) follow at residues 21–41, 42–62, 96–116, 133–155, 162–181, 214–234, 235–255, and 266–286; these read AVAAGVLTFTGAFVAGGFAVT, TAHVTGAVAATIFATAAGNAI, FLFVAAVVSTSVLPLIAIVLA, LPGVGNAIVAYLTGSTFLFGAAA, FGVVVLFILAALATATREII, VLLVAVIASIVPYVIGIFGIW, YLTLVVPADMIMLIGVWQAPD, and RGMFVAAAAFVVGRAVVVAGI.

This sequence belongs to the UbiA prenyltransferase family. DGGGP synthase subfamily. It depends on Mg(2+) as a cofactor.

The protein resides in the cell membrane. The catalysed reaction is sn-3-O-(geranylgeranyl)glycerol 1-phosphate + (2E,6E,10E)-geranylgeranyl diphosphate = 2,3-bis-O-(geranylgeranyl)-sn-glycerol 1-phosphate + diphosphate. It functions in the pathway membrane lipid metabolism; glycerophospholipid metabolism. In terms of biological role, prenyltransferase that catalyzes the transfer of the geranylgeranyl moiety of geranylgeranyl diphosphate (GGPP) to the C2 hydroxyl of (S)-3-O-geranylgeranylglyceryl phosphate (GGGP). This reaction is the second ether-bond-formation step in the biosynthesis of archaeal membrane lipids. The sequence is that of Digeranylgeranylglyceryl phosphate synthase from Haloquadratum walsbyi (strain DSM 16790 / HBSQ001).